Here is a 1153-residue protein sequence, read N- to C-terminus: Myosin-3 (1153 aa).

Positions 104-153 (KKVLQFWVQLPNGNWELGKIMSTSGEESVIVVTEGKVLKVKSETLVPANP) constitute a Myosin N-terminal SH3-like domain. A Myosin motor domain is found at 157–829 (DGVDDLMQLS…QIGVLEDTRN (673 aa)). Residues 248–255 (GESGAGKT) and 296–304 (NDNSSRFGK) each bind ATP. Actin-binding regions lie at residues 581-615 (LFEK…KQHL) and 709-731 (LFQL…KPNN). 3 IQ domains span residues 831 to 860 (TLHG…GITI), 854 to 883 (LKTG…RHRA), and 903 to 932 (TVDA…LSSG). A coiled-coil region spans residues 948-996 (YLSDLQRRVLRTEAALREKEEENDILRQRVQQYDNRWSEYETKMKSMEE). Positions 1020-1050 (DSARNSDASVNASDATDLDSGGSHYQMGHGR) are disordered. Polar residues predominate over residues 1024–1033 (NSDASVNASD).

Belongs to the TRAFAC class myosin-kinesin ATPase superfamily. Myosin family. Plant myosin class VIII subfamily. As to quaternary structure, homodimer.

Functionally, myosin heavy chain that is required for the cell cycle-regulated transport of various organelles and proteins for their segregation. Functions by binding with its tail domain to receptor proteins on organelles and exerting force with its N-terminal motor domain against actin filaments, thereby transporting its cargo along polarized actin cables. In Arabidopsis thaliana (Mouse-ear cress), this protein is Myosin-3 (VIII-A).